A 213-amino-acid polypeptide reads, in one-letter code: Orotate phosphoribosyltransferase (213 aa).

Lysine 26 is a 5-phospho-alpha-D-ribose 1-diphosphate binding site. 34–35 (FF) lines the orotate pocket. Residues 72-73 (YK), arginine 99, lysine 100, lysine 103, histidine 105, and 124-132 (DDVITAGTA) contribute to the 5-phospho-alpha-D-ribose 1-diphosphate site. Threonine 128 and arginine 156 together coordinate orotate.

It belongs to the purine/pyrimidine phosphoribosyltransferase family. PyrE subfamily. In terms of assembly, homodimer. The cofactor is Mg(2+).

It carries out the reaction orotidine 5'-phosphate + diphosphate = orotate + 5-phospho-alpha-D-ribose 1-diphosphate. It functions in the pathway pyrimidine metabolism; UMP biosynthesis via de novo pathway; UMP from orotate: step 1/2. Functionally, catalyzes the transfer of a ribosyl phosphate group from 5-phosphoribose 1-diphosphate to orotate, leading to the formation of orotidine monophosphate (OMP). In Salmonella arizonae (strain ATCC BAA-731 / CDC346-86 / RSK2980), this protein is Orotate phosphoribosyltransferase.